Here is a 153-residue protein sequence, read N- to C-terminus: Ribosomal RNA large subunit methyltransferase H (153 aa).

S-adenosyl-L-methionine-binding positions include leucine 75, glycine 102, and 121–126; that span reads LSKLTL.

It belongs to the RNA methyltransferase RlmH family. As to quaternary structure, homodimer.

Its subcellular location is the cytoplasm. The catalysed reaction is pseudouridine(1915) in 23S rRNA + S-adenosyl-L-methionine = N(3)-methylpseudouridine(1915) in 23S rRNA + S-adenosyl-L-homocysteine + H(+). Functionally, specifically methylates the pseudouridine at position 1915 (m3Psi1915) in 23S rRNA. The sequence is that of Ribosomal RNA large subunit methyltransferase H from Campylobacter jejuni (strain RM1221).